The chain runs to 289 residues: tRNA pseudouridine synthase B (289 aa).

D55 serves as the catalytic Nucleophile. Positions 243–289 are disordered; it reads PGGVLAQHEREGSRALDSAAGNAEHDREEARIADNNREDRSRQHADR. The segment covering 265-289 has biased composition (basic and acidic residues); that stretch reads AEHDREEARIADNNREDRSRQHADR.

The protein belongs to the pseudouridine synthase TruB family. Type 1 subfamily.

The enzyme catalyses uridine(55) in tRNA = pseudouridine(55) in tRNA. In terms of biological role, responsible for synthesis of pseudouridine from uracil-55 in the psi GC loop of transfer RNAs. This chain is tRNA pseudouridine synthase B, found in Chlorobium luteolum (strain DSM 273 / BCRC 81028 / 2530) (Pelodictyon luteolum).